Here is a 456-residue protein sequence, read N- to C-terminus: Sensitive to high expression protein 9, mitochondrial (456 aa).

Residues 1 to 30 (MLRYYGATRNLPLVFSINKLMLRASSFTRP) constitute a mitochondrion transit peptide. The Mitochondrial matrix segment spans residues 31 to 296 (FHYSSYSLQN…WSDKIRRTST (266 aa)). Coiled-coil stretches lie at residues 71-128 (QHLK…KDEL) and 178-277 (IQKL…YRAI). The helical transmembrane segment at 297–317 (WGTFILMGMNIFLFIVLQLLL) threads the bilayer. Residues 318 to 435 (EPWKRKRLVG…KLDAPLVFDT (118 aa)) are Mitochondrial intermembrane-facing. The helical transmembrane segment at 436-456 (LEFYLYSISLVSMTILVSGLI) threads the bilayer.

This sequence belongs to the SHE9 family. As to quaternary structure, homooligomer. Participates in a complex of about 300 kDa.

It localises to the mitochondrion inner membrane. Required for the maintenance of the structure of the mitochondrial inner membrane. Involved in mitochondrial morphology. Causes growth arrest when highly overexpressed. The polypeptide is Sensitive to high expression protein 9, mitochondrial (SHE9) (Saccharomyces cerevisiae (strain ATCC 204508 / S288c) (Baker's yeast)).